Consider the following 333-residue polypeptide: Nucleoid-associated protein VC0395_A1624/VC395_2154 (333 aa).

The protein belongs to the YejK family.

The protein resides in the cytoplasm. The protein localises to the nucleoid. This chain is Nucleoid-associated protein VC0395_A1624/VC395_2154, found in Vibrio cholerae serotype O1 (strain ATCC 39541 / Classical Ogawa 395 / O395).